A 324-amino-acid chain; its full sequence is tRNA uridine(34) hydroxylase (324 aa).

The 95-residue stretch at 145–239 folds into the Rhodanese domain; the sequence is NDKKTIFIDM…YVHDARKNGL (95 aa). Catalysis depends on cysteine 199, which acts as the Cysteine persulfide intermediate.

Belongs to the TrhO family.

The catalysed reaction is uridine(34) in tRNA + AH2 + O2 = 5-hydroxyuridine(34) in tRNA + A + H2O. Its function is as follows. Catalyzes oxygen-dependent 5-hydroxyuridine (ho5U) modification at position 34 in tRNAs. The sequence is that of tRNA uridine(34) hydroxylase from Buchnera aphidicola subsp. Acyrthosiphon pisum (strain APS) (Acyrthosiphon pisum symbiotic bacterium).